A 319-amino-acid chain; its full sequence is Cytochrome c biogenesis protein CcsA (319 aa).

7 helical membrane passes run 17-37, 44-64, 68-88, 143-163, 223-243, 257-271, and 286-306; these read TISI…LGGL, GMIV…ASSG, LSNL…LHTI, MLLS…ILII, VISL…VWAN, TWAF…IYLH, and VASI…LLGI.

The protein belongs to the CcmF/CycK/Ccl1/NrfE/CcsA family. May interact with Ccs1.

It localises to the plastid. The protein resides in the chloroplast thylakoid membrane. In terms of biological role, required during biogenesis of c-type cytochromes (cytochrome c6 and cytochrome f) at the step of heme attachment. This is Cytochrome c biogenesis protein CcsA from Lolium perenne (Perennial ryegrass).